Reading from the N-terminus, the 359-residue chain is Medium-wave-sensitive opsin 1 (359 aa).

At 1-47 the chain is on the extracellular side; that stretch reads MAQQLTGEQTLDHYEDSTQASIFTYTNSNSTRGPFEGPNYHIAPRWV. Residues 12–38 form a required for 11-cis-retinal regeneration region; that stretch reads DHYEDSTQASIFTYTNSNSTRGPFEGP. Residue Asn29 is glycosylated (N-linked (GlcNAc...) asparagine). Residues 48–72 form a helical membrane-spanning segment; the sequence is YHLTSTWMILVVIASVFTNGLVLAA. The Cytoplasmic segment spans residues 73–84; that stretch reads TMRFKKLRHPLN. The chain crosses the membrane as a helical span at residues 85–110; sequence WILVNLAVADLAETIIASTISVVNQI. The Extracellular portion of the chain corresponds to 111 to 124; sequence YGYFVLGHPLCVIE. A disulfide bridge links Cys121 with Cys198. Residues 125–144 traverse the membrane as a helical segment; that stretch reads GYIVSLCGITGLWSLAIISW. Over 145–163 the chain is Cytoplasmic; that stretch reads ERWLVVCKPFGNVRFDAKL. Residues 164–187 traverse the membrane as a helical segment; the sequence is ATVGIVFSWVWAAVWTAPPIFGWS. Over 188-213 the chain is Extracellular; sequence RYWPYGLKTSCGPDVFSGTSYPGVQS. The chain crosses the membrane as a helical span at residues 214–241; sequence YMMVLMVTCCIFPLSIIVLCYLQVWLAI. The Cytoplasmic portion of the chain corresponds to 242-263; it reads RAVAKQQKESESTQKAEKEVTR. The chain crosses the membrane as a helical span at residues 264–287; sequence MVVVMVFAYCLCWGPYTFFACFAT. The Extracellular portion of the chain corresponds to 288-295; the sequence is AHPGYAFH. The helical transmembrane segment at 296–320 threads the bilayer; it reads PLVASLPSYFAKSATIYNPIIYVFM. The residue at position 307 (Lys307) is an N6-(retinylidene)lysine. At 321-359 the chain is on the cytoplasmic side; the sequence is NRQFRNCILQLFGKKVDDSSELSSTSKTEVSSVSSVSPA.

Belongs to the G-protein coupled receptor 1 family. Opsin subfamily. As to quaternary structure, monomer. Homodimer. Homotetramer. In terms of processing, O-glycosylated. Post-translationally, phosphorylated on some or all of the serine and threonine residues present in the C-terminal region. In terms of tissue distribution, expressed in cone photoreceptor cells.

It localises to the membrane. Its function is as follows. Visual pigments are the light-absorbing molecules that mediate vision. They consist of an apoprotein, opsin, covalently linked to cis-retinal. May increase spectral sensitivity in dim light. This chain is Medium-wave-sensitive opsin 1 (Opn1mw), found in Rattus norvegicus (Rat).